A 206-amino-acid polypeptide reads, in one-letter code: RNA pyrophosphohydrolase (206 aa).

Residues 6-149 form the Nudix hydrolase domain; the sequence is GYRPNVGIVL…KRGVYARALR (144 aa). The short motif at 38 to 59 is the Nudix box element; that stretch reads GGMNTDETPVEAMYRELQEETG. Positions 175–206 are disordered; it reads MPGHTAGHDRPRKRPRTRGYWPKKATGDGPAS.

The protein belongs to the Nudix hydrolase family. RppH subfamily. A divalent metal cation is required as a cofactor.

Accelerates the degradation of transcripts by removing pyrophosphate from the 5'-end of triphosphorylated RNA, leading to a more labile monophosphorylated state that can stimulate subsequent ribonuclease cleavage. This Stenotrophomonas maltophilia (strain K279a) protein is RNA pyrophosphohydrolase.